A 252-amino-acid polypeptide reads, in one-letter code: MEAVERIGRIIEPSVEAMGYELVRVQLSGGQRPTLQIMAERSDGAAMTVEDCADISRAVSALLDVEDPLPGAYTLEVSSPGIDRPLTRLKDFERFAGFEARLETKAPVDGRKRFRGFLAGIEDDAVRLALPVEKKARKGAKAAPTRDAADAGEAGDAEATLVVIPFGLVLKAKLELTDELLTAAAAEQGAAPGTEGGAMEVEEDARPARRPHQPKPKKAKKKGPGRFSKAGAGEDVDGADGGPAAGPGAQDE.

A disordered region spans residues 188-252; it reads QGAAPGTEGG…PAAGPGAQDE (65 aa). Basic residues predominate over residues 208–224; it reads ARRPHQPKPKKAKKKGP.

Belongs to the RimP family.

The protein resides in the cytoplasm. Required for maturation of 30S ribosomal subunits. This Rhodospirillum centenum (strain ATCC 51521 / SW) protein is Ribosome maturation factor RimP.